The sequence spans 724 residues: Ribosomal RNA large subunit methyltransferase K/L (724 aa).

Residues 42–153 enclose the THUMP domain; the sequence is DAQRLVLWSR…KGRATLSVDL (112 aa).

It belongs to the methyltransferase superfamily. RlmKL family.

Its subcellular location is the cytoplasm. It carries out the reaction guanosine(2445) in 23S rRNA + S-adenosyl-L-methionine = N(2)-methylguanosine(2445) in 23S rRNA + S-adenosyl-L-homocysteine + H(+). The catalysed reaction is guanosine(2069) in 23S rRNA + S-adenosyl-L-methionine = N(2)-methylguanosine(2069) in 23S rRNA + S-adenosyl-L-homocysteine + H(+). In terms of biological role, specifically methylates the guanine in position 2445 (m2G2445) and the guanine in position 2069 (m7G2069) of 23S rRNA. This is Ribosomal RNA large subunit methyltransferase K/L from Xylella fastidiosa (strain M12).